Here is a 55-residue protein sequence, read N- to C-terminus: Trypsin inhibitor (55 aa).

One can recognise a BPTI/Kunitz inhibitor domain in the interval 4 to 54 (CLLPIKTGPCKGSFPRYAYDSSEDKCVEFIYGGCQANANNFETIEECEAAC). 3 disulfide bridges follow: Cys4/Cys54, Cys13/Cys37, and Cys29/Cys50.

In terms of assembly, monomer. In terms of tissue distribution, expressed exclusively in the middle silk gland.

Its function is as follows. This cocoon shell-associated protein inhibits trypsin Activity by forming a low-dissociation complex with trypsin. May play an important part in regulating proteolytic activity in the silk gland or protecting silk proteins from degradation during histolysis. The sequence is that of Trypsin inhibitor from Bombyx mori (Silk moth).